Consider the following 331-residue polypeptide: MKQTVYTASPESQQIHVWRLNTEGSLTLVQVVDVPGQVQPMVVSPDKRFLYVGVRPEFRVLAYRISPDDGALTFAAEAPLPGSPTHISTDRQGRFIFSGSYNAGSVSVTRLEDGIPVETVDIVEGLEGCHSANISPDNRTLWVPALKQDRICLFTLSDDGHLQAQNPAEVTTVEGAGPRHMVFHPNQQYAYVVNELNSSVDVWELHNPNGQIECIQTLDIMPADFADTRWAADIHITPDGRHLYACDRTSSLITVFSISEDGSVLAIEGFQPTETQPRGFNIDNSGKFLIAAGQKSHHIALYEIKGVQGLLEEKGRYAVGQGPMWVVVNAH.

It belongs to the cycloisomerase 2 family.

It catalyses the reaction 6-phospho-D-glucono-1,5-lactone + H2O = 6-phospho-D-gluconate + H(+). Its pathway is carbohydrate degradation; pentose phosphate pathway; D-ribulose 5-phosphate from D-glucose 6-phosphate (oxidative stage): step 2/3. Functionally, catalyzes the hydrolysis of 6-phosphogluconolactone to 6-phosphogluconate. In Enterobacter sp. (strain 638), this protein is 6-phosphogluconolactonase.